We begin with the raw amino-acid sequence, 443 residues long: Putative transporter AmpG 1 (443 aa).

A run of 12 helical transmembrane segments spans residues 6 to 26, 43 to 63, 74 to 96, 106 to 128, 144 to 164, 172 to 192, 255 to 275, 300 to 320, 326 to 346, 355 to 375, 394 to 414, and 416 to 436; these read HVCI…MITG, IGIL…APVF, ILGH…TSIL, VLLS…ILSA, GIYI…AIYL, KIYQ…ILVS, DISL…YRLP, VCKF…GIIM, LYSI…FILL, ILFI…TAYI, LSSM…YMVV, and FGWQ…LLIL.

The protein belongs to the major facilitator superfamily.

The protein localises to the cell inner membrane. In Rickettsia typhi (strain ATCC VR-144 / Wilmington), this protein is Putative transporter AmpG 1 (ampG1).